Reading from the N-terminus, the 157-residue chain is Protein Smg homolog (157 aa).

The protein belongs to the Smg family.

The polypeptide is Protein Smg homolog (Xanthomonas euvesicatoria pv. vesicatoria (strain 85-10) (Xanthomonas campestris pv. vesicatoria)).